The primary structure comprises 335 residues: UPF0284 protein TK0853 (335 aa).

The protein belongs to the UPF0284 family.

This is UPF0284 protein TK0853 from Thermococcus kodakarensis (strain ATCC BAA-918 / JCM 12380 / KOD1) (Pyrococcus kodakaraensis (strain KOD1)).